A 506-amino-acid chain; its full sequence is Squalene monooxygenase 1,1 (506 aa).

2 consecutive transmembrane segments (helical) span residues 3 to 23 and 47 to 67; these read LAFP…WTVF and DADV…YALA. Residues 57 to 58, 77 to 78, Arg85, Phe90, Arg157, Val173, Asp336, and Met349 each bind FAD; these read VG and ER. A helical transmembrane segment spans residues 447-467; sequence LIFHLCGITLSSIGQLLSPFP.

It belongs to the squalene monooxygenase family. FAD is required as a cofactor.

It localises to the membrane. The enzyme catalyses squalene + reduced [NADPH--hemoprotein reductase] + O2 = (S)-2,3-epoxysqualene + oxidized [NADPH--hemoprotein reductase] + H2O + H(+). It functions in the pathway terpene metabolism; lanosterol biosynthesis; lanosterol from farnesyl diphosphate: step 2/3. Its function is as follows. Catalyzes the stereospecific oxidation of squalene to (S)-2,3-epoxysqualene, and is considered to be a rate-limiting enzyme in steroid biosynthesis. This chain is Squalene monooxygenase 1,1 (SQP1,1), found in Brassica napus (Rape).